We begin with the raw amino-acid sequence, 148 residues long: Lysozyme C (148 aa).

The N-terminal stretch at 1-18 is a signal peptide; it reads MKVLIILGLVLLSVMVQG. Residues 19–148 form the C-type lysozyme domain; sequence KVFERCELAR…VSQYVQGCGV (130 aa). Disulfide bonds link Cys-24–Cys-146, Cys-48–Cys-134, Cys-83–Cys-99, and Cys-95–Cys-113. Residues Glu-53 and Asp-71 contribute to the active site.

This sequence belongs to the glycosyl hydrolase 22 family. Monomer.

It carries out the reaction Hydrolysis of (1-&gt;4)-beta-linkages between N-acetylmuramic acid and N-acetyl-D-glucosamine residues in a peptidoglycan and between N-acetyl-D-glucosamine residues in chitodextrins.. Lysozymes have primarily a bacteriolytic function; those in tissues and body fluids are associated with the monocyte-macrophage system and enhance the activity of immunoagents. The polypeptide is Lysozyme C (LYZ) (Callithrix jacchus (White-tufted-ear marmoset)).